Consider the following 94-residue polypeptide: MLQSNEYFSGKVKSIGFTSSSTGRASVGVMAEGEYTFGTAEPEEMTVVSGALKVLLPGTVEWKVYTAGEVFNVPVHSEFHLQVAEPTSYLCRYL.

This sequence belongs to the nucleoside phosphorylase PpnP family.

The catalysed reaction is a purine D-ribonucleoside + phosphate = a purine nucleobase + alpha-D-ribose 1-phosphate. It carries out the reaction adenosine + phosphate = alpha-D-ribose 1-phosphate + adenine. It catalyses the reaction cytidine + phosphate = cytosine + alpha-D-ribose 1-phosphate. The enzyme catalyses guanosine + phosphate = alpha-D-ribose 1-phosphate + guanine. The catalysed reaction is inosine + phosphate = alpha-D-ribose 1-phosphate + hypoxanthine. It carries out the reaction thymidine + phosphate = 2-deoxy-alpha-D-ribose 1-phosphate + thymine. It catalyses the reaction uridine + phosphate = alpha-D-ribose 1-phosphate + uracil. The enzyme catalyses xanthosine + phosphate = alpha-D-ribose 1-phosphate + xanthine. Functionally, catalyzes the phosphorolysis of diverse nucleosides, yielding D-ribose 1-phosphate and the respective free bases. Can use uridine, adenosine, guanosine, cytidine, thymidine, inosine and xanthosine as substrates. Also catalyzes the reverse reactions. This Salmonella paratyphi C (strain RKS4594) protein is Pyrimidine/purine nucleoside phosphorylase.